Reading from the N-terminus, the 371-residue chain is Cytochrome b (371 aa).

Transmembrane regions (helical) follow at residues 25 to 45 (FGSM…FLAV), 69 to 90 (WMMQ…YIHI), 105 to 125 (WMSG…GYVL), and 170 to 190 (FFAL…LHII). The heme b site is built by His-75 and His-89. Heme b is bound by residues His-174 and His-188. His-193 provides a ligand contact to a ubiquinone. 4 consecutive transmembrane segments (helical) span residues 218–238 (HKDL…VSFF), 280–300 (LGGA…PFTH), 312–332 (FSQL…WAAT), and 339–358 (FIVI…LLIP).

It belongs to the cytochrome b family. As to quaternary structure, the cytochrome bc1 complex contains 3 respiratory subunits (MT-CYB, CYC1 and UQCRFS1), 2 core proteins (UQCRC1 and UQCRC2) and probably 6 low-molecular weight proteins. Requires heme b as cofactor.

The protein localises to the mitochondrion inner membrane. In terms of biological role, component of the ubiquinol-cytochrome c reductase complex (complex III or cytochrome b-c1 complex) that is part of the mitochondrial respiratory chain. The b-c1 complex mediates electron transfer from ubiquinol to cytochrome c. Contributes to the generation of a proton gradient across the mitochondrial membrane that is then used for ATP synthesis. This Leiopython albertisii (Northern white-lipped python) protein is Cytochrome b (MT-CYB).